A 162-amino-acid chain; its full sequence is uncharacterized protein (162 aa).

The protein to R.meliloti R02472.

This is an uncharacterized protein from Escherichia coli (strain K12).